The following is a 484-amino-acid chain: Regulatory protein ViaA (484 aa).

The protein belongs to the ViaA family. In terms of assembly, homodimer. Interacts with RavA.

It is found in the cytoplasm. Component of the RavA-ViaA chaperone complex, which may act on the membrane to optimize the function of some of the respiratory chains. ViaA stimulates the ATPase activity of RavA. The chain is Regulatory protein ViaA from Edwardsiella ictaluri (strain 93-146).